A 493-amino-acid chain; its full sequence is Probable vesicular acetylcholine transporter-B (493 aa).

Over 1–39 (MQSTGAPGLAQSAVLQLSAMGERSRELGGALREPERKRR) the chain is Cytoplasmic. Residues 40 to 60 (LLLVVVCVALLLDNMLYMVIV) form a helical membrane-spanning segment. The Lumenal, vesicle portion of the chain corresponds to 61-86 (PIIPDYLADLRGERGNSSADLDIQIG). N76 carries an N-linked (GlcNAc...) asparagine glycan. Residues 87–107 (VLFASKALLQLLVNPLSGTFI) traverse the membrane as a helical segment. Topologically, residues 108–113 (DRVGYD) are cytoplasmic. A helical transmembrane segment spans residues 114–134 (LPLLIGLLVMFLSTCIFAFAE). Residues 135-143 (NYGTLFAAR) lie on the Lumenal, vesicle side of the membrane. The helical transmembrane segment at 144-164 (SLQGLGSAFADTSGIAMIADK) threads the bilayer. At 165-174 (FTEEAERSRA) the chain is on the cytoplasmic side. The chain crosses the membrane as a helical span at residues 175 to 195 (LGIALAFISFGSLVAPPFGGI). The Lumenal, vesicle portion of the chain corresponds to 196–203 (LYEFAGKR). Residues 204-224 (VPFIVLACVCLADGVLLLTVV) form a helical membrane-spanning segment. Over 225–247 (KPFSDRTRENMPVGTPIHRLMVD) the chain is Cytoplasmic. The chain crosses the membrane as a helical span at residues 248–268 (PYIAVVAGALTVCNIPLAFLE). Residues 269 to 284 (PTIANWMESTMDASKW) are Lumenal, vesicle-facing. The helical transmembrane segment at 285–305 (QMGLVWLPAFLPHVLGVYITV) threads the bilayer. Residues 306–315 (RLAARYPERQ) are Cytoplasmic-facing. The chain crosses the membrane as a helical span at residues 316–336 (WFYGALGMVIIGASSCTVPAC). Residues 337-347 (KTFGELVFPLC) lie on the Lumenal, vesicle side of the membrane. Residues 348–368 (GICFGIALVDTALLPTLAFLV) form a helical membrane-spanning segment. The Cytoplasmic segment spans residues 369–378 (DVRHVSVYGS). The helical transmembrane segment at 379 to 399 (VYAIADISYSVAYAMGPVVAG) threads the bilayer. At 400 to 406 (QIVHNLG) the chain is on the lumenal, vesicle side. The helical transmembrane segment at 407–427 (FVQLNLGMGLVNVLYAPALLL) threads the bilayer. The Cytoplasmic portion of the chain corresponds to 428–493 (LRPVCQIKPS…EEEESGPESA (66 aa)). The tract at residues 467-493 (GLSAGAGTEHGLRGRSEEEEESGPESA) is disordered. A compositionally biased stretch (acidic residues) spans 483-493 (EEEEESGPESA).

Belongs to the major facilitator superfamily. Vesicular transporter family.

Its subcellular location is the membrane. Its function is as follows. Involved in acetylcholine transport into synaptic vesicles. This chain is Probable vesicular acetylcholine transporter-B (slc18a3b), found in Danio rerio (Zebrafish).